A 212-amino-acid chain; its full sequence is Cytidylate kinase (212 aa).

An ATP-binding site is contributed by 7–15 (GPAASGKGT).

It belongs to the cytidylate kinase family. Type 1 subfamily.

It is found in the cytoplasm. It catalyses the reaction CMP + ATP = CDP + ADP. The catalysed reaction is dCMP + ATP = dCDP + ADP. In Bradyrhizobium sp. (strain ORS 278), this protein is Cytidylate kinase.